The sequence spans 443 residues: Two-pore potassium channel 2 (443 aa).

At 1–144 (MANDGNGDNN…KTDQQSDSKT (144 aa)) the chain is on the cytoplasmic side. The disordered stretch occupies residues 67–109 (SLPIDALSQNPSTSSSATTSFSDSTDLLLPLTEPNKPVRKSKP). Residues 72-98 (ALSQNPSTSSSATTSFSDSTDLLLPLT) show a composition bias toward low complexity. A helical transmembrane segment spans residues 145 to 165 (IVNQAVALLVVYLSLGVLIYW). An intramembrane region (pore-forming) is located at residues 181–200 (DALYFCIVTMCTIGYGDITP). Residues 208 to 228 (FSIFFVLVGFGFMDILLSGMV) form a helical membrane-spanning segment. Residues 229–274 (TYVLDLQENYMLETARNESLNLNDRDKVRSYIIDVKKGRMRIRLKV) are Cytoplasmic-facing. A helical membrane pass occupies residues 275–295 (GLALGVVVLCLGFGVLIMHFV). Residues 302–321 (DSFYFSVMSVTTVGYGDRAF) constitute an intramembrane region (pore-forming). Residues 328-348 (LLAAMWLLVSTLAVARAILFL) form a helical membrane-spanning segment. Residues 349 to 443 (AESRVDKRNR…TKDLPTATSI (95 aa)) lie on the Cytoplasmic side of the membrane. 2 EF-hand domains span residues 365 to 400 (LGESMSISQFLDADIDCNGCVSKAEFVIYKLKKMDK) and 404 to 439 (KDINPIGFQFDKLDRTNSGRITLLDLLESSTKDLPT). 9 residues coordinate Ca(2+): D378, D380, N382, C384, E389, D417, S421, R423, and D428.

The protein belongs to the two pore domain potassium channel (TC 1.A.1.7) family. Homodimer. In terms of tissue distribution, expressed in roots, stems, leaves and flowers.

Its subcellular location is the vacuole membrane. Probable voltage-independent potassium-selective tonoplast ion channel. This chain is Two-pore potassium channel 2 (TPK2), found in Arabidopsis thaliana (Mouse-ear cress).